The primary structure comprises 1200 residues: Zinc finger protein 804A (1200 aa).

Residues 57-81 form a C2H2-type zinc finger; it reads FYCELCDKQYYKHQEFDNHINSYDH. Disordered regions lie at residues 252–280, 343–367, 582–687, 727–777, 799–828, and 874–949; these read STSHLQLPPPTCELLSSEEKGNSPPPEAM, DGPVSKSNPNIIEKNPTVPNDRTSA, HWFH…NCGG, EDDG…SDES, QPKKKRRRKRSRLHIGDGTTKMKGNSNYPM, and PYNP…TNPE. Basic residues predominate over residues 585–603; it reads HKSRRKKKRRKLCRYHPGK. Residues 604-666 show a composition bias toward basic and acidic residues; that stretch reads SSKEPEGSGK…ASTHLGEKET (63 aa). Polar residues-rich tracts occupy residues 667–687 and 732–756; these read MNTTVNTESNDAAPGSQNCGG and LASQSNVKGPTQNQPVKRGYSSLTN. Over residues 800–811 the composition is skewed to basic residues; the sequence is PKKKRRRKRSRL. The segment covering 891–944 has biased composition (polar residues); it reads TETTPCDSSQTSNDLATPVNVTRDPSNSTTDNTLLEHNQRSQTTNSNEKQTPFK.

This chain is Zinc finger protein 804A (Znf804a), found in Mus musculus (Mouse).